A 196-amino-acid chain; its full sequence is Dephospho-CoA kinase (196 aa).

Positions 5 to 196 (IIGLTGGIAT…QVDIALNFEL (192 aa)) constitute a DPCK domain. 13–18 (ATGKTT) contacts ATP.

Belongs to the CoaE family.

The protein resides in the cytoplasm. The catalysed reaction is 3'-dephospho-CoA + ATP = ADP + CoA + H(+). The protein operates within cofactor biosynthesis; coenzyme A biosynthesis; CoA from (R)-pantothenate: step 5/5. Functionally, catalyzes the phosphorylation of the 3'-hydroxyl group of dephosphocoenzyme A to form coenzyme A. The sequence is that of Dephospho-CoA kinase from Trichormus variabilis (strain ATCC 29413 / PCC 7937) (Anabaena variabilis).